A 128-amino-acid chain; its full sequence is Small ribosomal subunit protein uS11 (128 aa).

The protein belongs to the universal ribosomal protein uS11 family. As to quaternary structure, part of the 30S ribosomal subunit. Interacts with proteins S7 and S18. Binds to IF-3.

Functionally, located on the platform of the 30S subunit, it bridges several disparate RNA helices of the 16S rRNA. Forms part of the Shine-Dalgarno cleft in the 70S ribosome. This chain is Small ribosomal subunit protein uS11, found in Porphyromonas gingivalis (strain ATCC BAA-308 / W83).